A 296-amino-acid chain; its full sequence is Small ribosomal subunit protein uS2 (296 aa).

Over residues 274–284 the composition is skewed to low complexity; sequence ASSAAPADTWA. The interval 274–296 is disordered; that stretch reads ASSAAPADTWAGESGNPDAGVKW.

Belongs to the universal ribosomal protein uS2 family. In terms of assembly, component of the small ribosomal subunit. Mature ribosomes consist of a small (40S) and a large (60S) subunit. The 40S subunit contains about 33 different proteins and 1 molecule of RNA (18S). The 60S subunit contains about 49 different proteins and 3 molecules of RNA (25S, 5.8S and 5S). Interacts with RPS21.

The protein localises to the cytoplasm. In terms of biological role, required for the assembly and/or stability of the 40S ribosomal subunit. Required for the processing of the 20S rRNA-precursor to mature 18S rRNA in a late step of the maturation of 40S ribosomal subunits. In Ajellomyces capsulatus (strain G186AR / H82 / ATCC MYA-2454 / RMSCC 2432) (Darling's disease fungus), this protein is Small ribosomal subunit protein uS2.